The primary structure comprises 509 residues: Steroid 17-alpha-hydroxylase/17,20 lyase (509 aa).

C440 lines the heme pocket.

This sequence belongs to the cytochrome P450 family. Heme serves as cofactor.

It localises to the endoplasmic reticulum membrane. The protein resides in the microsome membrane. It catalyses the reaction a C21-steroid + reduced [NADPH--hemoprotein reductase] + O2 = a 17alpha-hydroxy-C21-steroid + oxidized [NADPH--hemoprotein reductase] + H2O + H(+). The enzyme catalyses progesterone + reduced [NADPH--hemoprotein reductase] + O2 = 17alpha-hydroxyprogesterone + oxidized [NADPH--hemoprotein reductase] + H2O + H(+). It carries out the reaction pregnenolone + reduced [NADPH--hemoprotein reductase] + O2 = 17alpha-hydroxypregnenolone + oxidized [NADPH--hemoprotein reductase] + H2O + H(+). The catalysed reaction is 17alpha-hydroxyprogesterone + reduced [NADPH--hemoprotein reductase] + O2 = androst-4-ene-3,17-dione + acetate + oxidized [NADPH--hemoprotein reductase] + H2O + 2 H(+). It catalyses the reaction 17alpha-hydroxyprogesterone + reduced [NADPH--hemoprotein reductase] + O2 = 16alpha,17alpha-dihydroxyprogesterone + oxidized [NADPH--hemoprotein reductase] + H2O + H(+). The enzyme catalyses 16alpha,17alpha-dihydroxyprogesterone + reduced [NADPH--hemoprotein reductase] + O2 = 6beta,16alpha,17alpha-trihydroxyprogesterone + oxidized [NADPH--hemoprotein reductase] + H2O + H(+). It carries out the reaction 17alpha-hydroxypregnenolone + reduced [NADPH--hemoprotein reductase] + O2 = 3beta-hydroxyandrost-5-en-17-one + acetate + oxidized [NADPH--hemoprotein reductase] + H2O + 2 H(+). The catalysed reaction is 16alpha,17alpha-dihydroxypregnenolone + reduced [NADPH--hemoprotein reductase] + O2 = 3beta,16alpha-dihydroxy-androst-5-en-17-one + acetate + oxidized [NADPH--hemoprotein reductase] + H2O + 2 H(+). It catalyses the reaction 3beta-hydroxyandrost-5-en-17-one + reduced [NADPH--hemoprotein reductase] + O2 = 3beta,16alpha-dihydroxy-androst-5-en-17-one + oxidized [NADPH--hemoprotein reductase] + H2O + H(+). The enzyme catalyses androst-4-ene-3,17-dione + reduced [NADPH--hemoprotein reductase] + O2 = 16alpha-hydroxyandrost-4-ene-3,17-dione + oxidized [NADPH--hemoprotein reductase] + H2O + H(+). Its pathway is steroid hormone biosynthesis. It functions in the pathway steroid biosynthesis; glucocorticoid biosynthesis. Its activity is regulated as follows. Regulated predominantly by intracellular cAMP levels. The 17,20-lyase activity is stimulated by cytochrome b5, which acts as an allosteric effector increasing the Vmax of the lyase activity. Functionally, a cytochrome P450 monooxygenase involved in corticoid and androgen biosynthesis. Catalyzes 17-alpha hydroxylation of C21 steroids, which is common for both pathways. A second oxidative step, required only for androgen synthesis, involves an acyl-carbon cleavage. The 17-alpha hydroxy intermediates, as part of adrenal glucocorticoids biosynthesis pathway, are precursors of cortisol. Hydroxylates steroid hormones, pregnenolone and progesterone to form 17-alpha hydroxy metabolites, followed by the cleavage of the C17-C20 bond to form C19 steroids, dehydroepiandrosterone (DHEA) and androstenedione. Has 16-alpha hydroxylase activity. Catalyzes 16-alpha hydroxylation of 17-alpha hydroxy pregnenolone, followed by the cleavage of the C17-C20 bond to form 16-alpha-hydroxy DHEA. Also 16-alpha hydroxylates androgens, relevant for estriol synthesis. Mechanistically, uses molecular oxygen inserting one oxygen atom into a substrate, and reducing the second into a water molecule, with two electrons provided by NADPH via cytochrome P450 reductase (CPR; NADPH-ferrihemoprotein reductase). The protein is Steroid 17-alpha-hydroxylase/17,20 lyase (Cyp17a1) of Peromyscus leucopus (White-footed mouse).